A 484-amino-acid polypeptide reads, in one-letter code: Glutamyl-tRNA(Gln) amidotransferase subunit A (484 aa).

Catalysis depends on charge relay system residues K77 and S152. S176 functions as the Acyl-ester intermediate in the catalytic mechanism.

This sequence belongs to the amidase family. GatA subfamily. In terms of assembly, heterotrimer of A, B and C subunits.

It carries out the reaction L-glutamyl-tRNA(Gln) + L-glutamine + ATP + H2O = L-glutaminyl-tRNA(Gln) + L-glutamate + ADP + phosphate + H(+). Allows the formation of correctly charged Gln-tRNA(Gln) through the transamidation of misacylated Glu-tRNA(Gln) in organisms which lack glutaminyl-tRNA synthetase. The reaction takes place in the presence of glutamine and ATP through an activated gamma-phospho-Glu-tRNA(Gln). The protein is Glutamyl-tRNA(Gln) amidotransferase subunit A of Pseudomonas aeruginosa (strain LESB58).